Here is a 363-residue protein sequence, read N- to C-terminus: Histidinol-phosphate aminotransferase (363 aa).

N6-(pyridoxal phosphate)lysine is present on K218.

The protein belongs to the class-II pyridoxal-phosphate-dependent aminotransferase family. Histidinol-phosphate aminotransferase subfamily. As to quaternary structure, homodimer. Requires pyridoxal 5'-phosphate as cofactor.

It carries out the reaction L-histidinol phosphate + 2-oxoglutarate = 3-(imidazol-4-yl)-2-oxopropyl phosphate + L-glutamate. It functions in the pathway amino-acid biosynthesis; L-histidine biosynthesis; L-histidine from 5-phospho-alpha-D-ribose 1-diphosphate: step 7/9. This chain is Histidinol-phosphate aminotransferase, found in Xanthomonas axonopodis pv. citri (strain 306).